We begin with the raw amino-acid sequence, 48 residues long: uncharacterized protein (48 aa).

Residues 1 to 48 (MLFCNNNNNNNNNNNNNNNNNNNNNNNNNNNNNNNNNNNSSNNNNFSR) are disordered.

This is an uncharacterized protein from Dictyostelium discoideum (Social amoeba).